The primary structure comprises 281 residues: D-arabinitol 2-dehydrogenase [ribulose-forming] (281 aa).

Residues Leu-31 and Asn-52 each contribute to the NADP(+) site. The Proton donor role is filled by Ser-169. NADP(+) is bound by residues Tyr-184, Lys-188, Ile-217, and Thr-219. Tyr-184 functions as the Proton acceptor in the catalytic mechanism. The Lowers pKa of active site Tyr role is filled by Lys-188.

The protein belongs to the short-chain dehydrogenases/reductases (SDR) family.

The catalysed reaction is D-arabinitol + NAD(+) = D-ribulose + NADH + H(+). It functions in the pathway carbohydrate metabolism; D-arabinitol metabolism. This Candida albicans (strain WO-1) (Yeast) protein is D-arabinitol 2-dehydrogenase [ribulose-forming] (ARD1).